The primary structure comprises 430 residues: MSQITDVYAREILDSRGNPTLEVEVFLESGAMGRAAVPSGASTGEREALELRDGDKGRYLGKGVLKAVANVNDIIAEEVIGMEATDQVGIDRKMLELDGTEFKSKLGANAILGVSLAVAKAAADEVGLSLYQYIGGANAKELPLPMMNIINGGAHADNNVDIQEFMIMPAGAKNFAEALRMGAEIFHALKSVLKGKGYNTAVGDEGGFAPNLKSNEEALEVIIEAIQKAGFKPGEDVLLALDVASSELFSDGVYTLENEAQPKKTADQLIDFYENLVNKYPIISIEDGMAENDWEGWKKMTERLGKRIQIVGDDLFVTNPKILKEGIDKGIANSILIKLNQIGTLTETLDAIEMAKRAGYTTVISHRSGETEDTTLADLSVAVNAGQIKTGSLCRTDRVCKYNQLLRIEDELDAVALFRGKEVFYNLKKK.

Glutamine 163 serves as a coordination point for (2R)-2-phosphoglycerate. Glutamate 205 (proton donor) is an active-site residue. The Mg(2+) site is built by aspartate 242, glutamate 286, and aspartate 313. Residues lysine 338, arginine 367, serine 368, and lysine 389 each coordinate (2R)-2-phosphoglycerate. The active-site Proton acceptor is the lysine 338.

This sequence belongs to the enolase family. Mg(2+) serves as cofactor.

The protein localises to the cytoplasm. Its subcellular location is the secreted. It is found in the cell surface. It carries out the reaction (2R)-2-phosphoglycerate = phosphoenolpyruvate + H2O. It functions in the pathway carbohydrate degradation; glycolysis; pyruvate from D-glyceraldehyde 3-phosphate: step 4/5. Its function is as follows. Catalyzes the reversible conversion of 2-phosphoglycerate (2-PG) into phosphoenolpyruvate (PEP). It is essential for the degradation of carbohydrates via glycolysis. The polypeptide is Enolase (Geotalea daltonii (strain DSM 22248 / JCM 15807 / FRC-32) (Geobacter daltonii)).